Here is a 476-residue protein sequence, read N- to C-terminus: Argininosuccinate lyase (476 aa).

This sequence belongs to the lyase 1 family. Argininosuccinate lyase subfamily.

It is found in the cytoplasm. It carries out the reaction 2-(N(omega)-L-arginino)succinate = fumarate + L-arginine. It functions in the pathway amino-acid biosynthesis; L-arginine biosynthesis; L-arginine from L-ornithine and carbamoyl phosphate: step 3/3. The protein is Argininosuccinate lyase of Gluconacetobacter diazotrophicus (strain ATCC 49037 / DSM 5601 / CCUG 37298 / CIP 103539 / LMG 7603 / PAl5).